We begin with the raw amino-acid sequence, 86 residues long: MVKIRLTRGGAKKRPFYQIIVTDSRNKRDGRNIERVGHYNPVAQGAESRVVLNMARVEHWVKNGAQLTDKVRSLLKEVSKTQATAA.

Belongs to the bacterial ribosomal protein bS16 family.

The polypeptide is Small ribosomal subunit protein bS16 (Xylella fastidiosa (strain 9a5c)).